Reading from the N-terminus, the 613-residue chain is MRMFSLQKMAMAFTLLFFACLCSFVSPDAQGDALFALRISLRALPNQLSDWNQNQVNPCTWSQVICDDKNFVTSLTLSDMNFSGTLSSRVGILENLKTLTLKGNGITGEIPEDFGNLTSLTSLDLEDNQLTGRIPSTIGNLKKLQFLTLSRNKLNGTIPESLTGLPNLLNLLLDSNSLSGQIPQSLFEIPKYNFTSNNLNCGGRQPHPCVSAVAHSGDSSKPKTGIIAGVVAGVTVVLFGILLFLFCKDRHKGYRRDVFVDVAGEVDRRIAFGQLKRFAWRELQLATDNFSEKNVLGQGGFGKVYKGVLPDNTKVAVKRLTDFESPGGDAAFQREVEMISVAVHRNLLRLIGFCTTQTERLLVYPFMQNLSLAHRLREIKAGDPVLDWETRKRIALGAARGFEYLHEHCNPKIIHRDVKAANVLLDEDFEAVVGDFGLAKLVDVRRTNVTTQVRGTMGHIAPEYLSTGKSSERTDVFGYGIMLLELVTGQRAIDFSRLEEEDDVLLLDHVKKLEREKRLGAIVDKNLDGEYIKEEVEMMIQVALLCTQGSPEDRPVMSEVVRMLEGEGLAERWEEWQNVEVTRRHEFERLQRRFDWGEDSMHNQDAIELSGGR.

The first 31 residues, 1–31 (MRMFSLQKMAMAFTLLFFACLCSFVSPDAQG), serve as a signal peptide directing secretion. At 32–225 (DALFALRISL…SGDSSKPKTG (194 aa)) the chain is on the extracellular side. N-linked (GlcNAc...) asparagine glycans are attached at residues asparagine 81 and asparagine 116. 4 LRR repeats span residues 95 to 117 (NLKT…FGNL), 119 to 141 (SLTS…IGNL), 143 to 166 (KLQF…TGLP), and 167 to 189 (NLLN…LFEI). The N-linked (GlcNAc...) asparagine glycan is linked to asparagine 155. N-linked (GlcNAc...) asparagine glycosylation is present at asparagine 193. Residues 226-246 (IIAGVVAGVTVVLFGILLFLF) form a helical membrane-spanning segment. Residues 247–613 (CKDRHKGYRR…QDAIELSGGR (367 aa)) are Cytoplasmic-facing. At threonine 287 the chain carries Phosphothreonine. Residues 290 to 569 (FSEKNVLGQG…VVRMLEGEGL (280 aa)) form the Protein kinase domain. An ATP-binding site is contributed by 296–304 (LGQGGFGKV). Threonine 313 is subject to Phosphothreonine. Lysine 318 provides a ligand contact to ATP. Position 371 is a phosphoserine (serine 371). Threonine 390 is subject to Phosphothreonine. Residue aspartate 417 is the Proton acceptor of the active site. Phosphothreonine occurs at positions 450, 451, and 456. Tyrosine 464 carries the post-translational modification Phosphotyrosine. At serine 466 the chain carries Phosphoserine. The residue at position 467 (threonine 467) is a Phosphothreonine. Serine 471 is modified (phosphoserine). The residue at position 547 (threonine 547) is a Phosphothreonine.

The protein belongs to the protein kinase superfamily. Ser/Thr protein kinase family.

Its subcellular location is the cell membrane. It carries out the reaction L-seryl-[protein] + ATP = O-phospho-L-seryl-[protein] + ADP + H(+). It catalyses the reaction L-threonyl-[protein] + ATP = O-phospho-L-threonyl-[protein] + ADP + H(+). The sequence is that of Probable LRR receptor-like serine/threonine-protein kinase At5g10290 from Arabidopsis thaliana (Mouse-ear cress).